The chain runs to 567 residues: Platelet glycoprotein V (567 aa).

Residues 1 to 16 (MLRSALLSAVLPLLRA) form the signal peptide. One can recognise an LRRNT domain in the interval 17–50 (QPFPCPKTCKCVVRDAAQCSGGSVAHIAELGLPT). Over 17-522 (QPFPCPKTCK…ESPNNRLYWG (506 aa)) the chain is Extracellular. Asparagine 51 and asparagine 67 each carry an N-linked (GlcNAc...) asparagine glycan. LRR repeat units lie at residues 75-96 (VLQR…TFND), 99-120 (KLKT…ILDK), 123-144 (LLEQ…LFQQ), 147-168 (NLQE…LFSS), 171-193 (ELKL…LGAQ), 195-216 (KLEK…LLSN), 219-240 (ALTE…AFDR), 243-264 (NLSS…LFLH), 267-288 (SVSR…LFGE), 291-312 (GLRE…AFRN), 315-337 (GLQT…VFQG), 340-361 (ELRV…ALRG), 364-385 (HLRQ…LFRN), and 388-409 (SLES…VFAA). Asparagine 181 is a glycosylation site (N-linked (GlcNAc...) asparagine). N-linked (GlcNAc...) asparagine glycosylation occurs at asparagine 243. Residues asparagine 298 and asparagine 312 are each glycosylated (N-linked (GlcNAc...) asparagine). N-linked (GlcNAc...) asparagine glycosylation occurs at asparagine 385. Residues 421–474 (NPWLCDCGLWRFLQWLRHHPDILGRDEPPQCRGPEPRASLSFWELLQGDPWCPD) enclose the LRRCT domain. The helical transmembrane segment at 523–543 (LYILLLVAQAIIAAFIVFAMI) threads the bilayer. Residues 544–567 (KIGQLFRTLIREKLLLEAMGKSCN) lie on the Cytoplasmic side of the membrane.

It localises to the membrane. In terms of biological role, the GPIb-V-IX complex functions as the vWF receptor and mediates vWF-dependent platelet adhesion to blood vessels. The adhesion of platelets to injured vascular surfaces in the arterial circulation is a critical initiating event in hemostasis. The sequence is that of Platelet glycoprotein V (Gp5) from Mus musculus (Mouse).